The primary structure comprises 336 residues: 25S rRNA (uridine(2634)-N(3))-methyltransferase (336 aa).

The tract at residues 286–307 (PGYHHRRTNSEQDTTKPAKERD) is disordered. The segment covering 293–307 (TNSEQDTTKPAKERD) has biased composition (basic and acidic residues).

Belongs to the class I-like SAM-binding methyltransferase superfamily. BMT5 family.

It localises to the nucleus. It is found in the nucleolus. It carries out the reaction uridine(2634) in 25S rRNA + S-adenosyl-L-methionine = N(3)-methyluridine(2634) in 25S rRNA + S-adenosyl-L-homocysteine + H(+). Functionally, S-adenosyl-L-methionine-dependent methyltransferase that specifically methylates the N(3) position of uridine 2634 (m3U2634) in 25S rRNA. The protein is 25S rRNA (uridine(2634)-N(3))-methyltransferase (BMT5) of Saccharomyces cerevisiae (strain ATCC 204508 / S288c) (Baker's yeast).